We begin with the raw amino-acid sequence, 909 residues long: NADH-quinone oxidoreductase subunit G (909 aa).

One can recognise a 2Fe-2S ferredoxin-type domain in the interval Met1–Glu83. Residues Cys34, Cys45, Cys48, and Cys67 each contribute to the [2Fe-2S] cluster site. One can recognise a 4Fe-4S His(Cys)3-ligated-type domain in the interval Glu83–Gly122. His99, Cys103, Cys106, Cys112, Cys151, Cys154, Cys157, Cys201, Cys228, Cys231, Cys235, and Cys263 together coordinate [4Fe-4S] cluster. The 4Fe-4S Mo/W bis-MGD-type domain occupies Met221 to Asp277.

This sequence belongs to the complex I 75 kDa subunit family. In terms of assembly, composed of 13 different subunits. Subunits NuoCD, E, F, and G constitute the peripheral sector of the complex. It depends on [2Fe-2S] cluster as a cofactor. [4Fe-4S] cluster serves as cofactor.

The enzyme catalyses a quinone + NADH + 5 H(+)(in) = a quinol + NAD(+) + 4 H(+)(out). Functionally, NDH-1 shuttles electrons from NADH, via FMN and iron-sulfur (Fe-S) centers, to quinones in the respiratory chain. The immediate electron acceptor for the enzyme in this species is believed to be ubiquinone. Couples the redox reaction to proton translocation (for every two electrons transferred, four hydrogen ions are translocated across the cytoplasmic membrane), and thus conserves the redox energy in a proton gradient. The sequence is that of NADH-quinone oxidoreductase subunit G (nuoG) from Shewanella oneidensis (strain ATCC 700550 / JCM 31522 / CIP 106686 / LMG 19005 / NCIMB 14063 / MR-1).